The following is a 423-amino-acid chain: Tyrosine--tRNA ligase (423 aa).

L-tyrosine is bound at residue tyrosine 35. Residues 40 to 49 (PTAASLHVGH) carry the 'HIGH' region motif. L-tyrosine is bound by residues tyrosine 170 and glutamine 174. Positions 231–235 (KFGKS) match the 'KMSKS' region motif. Lysine 234 contacts ATP. The 67-residue stretch at 353 to 419 (GPLVDLLVEV…GKKNLAAVEV (67 aa)) folds into the S4 RNA-binding domain.

The protein belongs to the class-I aminoacyl-tRNA synthetase family. TyrS type 1 subfamily. As to quaternary structure, homodimer.

It localises to the cytoplasm. It carries out the reaction tRNA(Tyr) + L-tyrosine + ATP = L-tyrosyl-tRNA(Tyr) + AMP + diphosphate + H(+). Catalyzes the attachment of tyrosine to tRNA(Tyr) in a two-step reaction: tyrosine is first activated by ATP to form Tyr-AMP and then transferred to the acceptor end of tRNA(Tyr). The sequence is that of Tyrosine--tRNA ligase from Streptomyces griseus subsp. griseus (strain JCM 4626 / CBS 651.72 / NBRC 13350 / KCC S-0626 / ISP 5235).